Reading from the N-terminus, the 344-residue chain is Arginine N-succinyltransferase (344 aa).

L125 contacts succinyl-CoA. Residue H229 is the Proton donor of the active site.

It belongs to the arginine N-succinyltransferase family.

The catalysed reaction is succinyl-CoA + L-arginine = N(2)-succinyl-L-arginine + CoA + H(+). The protein operates within amino-acid degradation; L-arginine degradation via AST pathway; L-glutamate and succinate from L-arginine: step 1/5. In terms of biological role, catalyzes the transfer of succinyl-CoA to arginine to produce N(2)-succinylarginine. The protein is Arginine N-succinyltransferase of Escherichia fergusonii (strain ATCC 35469 / DSM 13698 / CCUG 18766 / IAM 14443 / JCM 21226 / LMG 7866 / NBRC 102419 / NCTC 12128 / CDC 0568-73).